The chain runs to 248 residues: Ubiquinone biosynthesis O-methyltransferase (248 aa).

4 residues coordinate S-adenosyl-L-methionine: arginine 40, glycine 71, aspartate 92, and methionine 135.

This sequence belongs to the methyltransferase superfamily. UbiG/COQ3 family.

The enzyme catalyses a 3-demethylubiquinol + S-adenosyl-L-methionine = a ubiquinol + S-adenosyl-L-homocysteine + H(+). It carries out the reaction a 3-(all-trans-polyprenyl)benzene-1,2-diol + S-adenosyl-L-methionine = a 2-methoxy-6-(all-trans-polyprenyl)phenol + S-adenosyl-L-homocysteine + H(+). Its pathway is cofactor biosynthesis; ubiquinone biosynthesis. O-methyltransferase that catalyzes the 2 O-methylation steps in the ubiquinone biosynthetic pathway. This is Ubiquinone biosynthesis O-methyltransferase from Roseobacter denitrificans (strain ATCC 33942 / OCh 114) (Erythrobacter sp. (strain OCh 114)).